The chain runs to 145 residues: Heat shock protein hsp-16.2 (145 aa).

The 106-residue stretch at 32 to 137 (VCRISPSESS…QGRSIPIQQA (106 aa)) folds into the sHSP domain.

Belongs to the small heat shock protein (HSP20) family.

The chain is Heat shock protein hsp-16.2 from Caenorhabditis elegans.